Here is a 387-residue protein sequence, read N- to C-terminus: 3-ketoacyl-CoA thiolase (387 aa).

Cysteine 91 acts as the Acyl-thioester intermediate in catalysis. Catalysis depends on proton acceptor residues histidine 343 and cysteine 373.

The protein belongs to the thiolase-like superfamily. Thiolase family. As to quaternary structure, heterotetramer of two alpha chains (FadB) and two beta chains (FadA).

It is found in the cytoplasm. The enzyme catalyses an acyl-CoA + acetyl-CoA = a 3-oxoacyl-CoA + CoA. It participates in lipid metabolism; fatty acid beta-oxidation. Functionally, catalyzes the final step of fatty acid oxidation in which acetyl-CoA is released and the CoA ester of a fatty acid two carbons shorter is formed. Involved in the aerobic and anaerobic degradation of long-chain fatty acids. This Escherichia coli O6:H1 (strain CFT073 / ATCC 700928 / UPEC) protein is 3-ketoacyl-CoA thiolase.